The following is a 446-amino-acid chain: MVEPAIGRNHIRAGRHHGRARIVFARTKNHAYLSHDAYCSRYPPIGRENADRLRIRTVVDRRTGRGAERWHRSPRQANGRFSNQRYSSTSPNSSPACPLIYFISIKAKRIACVVSAVIFVATSCVSPLTGFAFWETNLAYEGESIYNYLQVKNLSDRTILSTNVLFGVQSVTMKDKGLTGMYYDTALAAPALADNANSALILGMGTGTYARQLKQYYPKMNITGVEIDQKITDLAGEYFDEPADIPVTTYDGRAWLAASHDKYDVIMVDAYQDITIPFQMSSTEFFTMVREHLNPGGVMVVNMNMISDGQGSINEALSDTIASVFGNGNTLTADVPNTTNRELFAKKPGSGSEENSMQQASKALNLRETTYERTGSEDLEWYMEEVASRFRKVNEPDSASTILTDDKAPVEVLGMHAIDQIIADEAGPYRQILKDEGFGGLLRAVQ.

The interval 1-117 (MVEPAIGRNH…KRIACVVSAV (117 aa)) is unknown. A disordered region spans residues 64–94 (GRGAERWHRSPRQANGRFSNQRYSSTSPNSS). Polar residues predominate over residues 75-94 (RQANGRFSNQRYSSTSPNSS). The region spanning 116-351 (AVIFVATSCV…ELFAKKPGSG (236 aa)) is the PABS domain. Positions 118–353 (IFVATSCVSP…FAKKPGSGSE (236 aa)) are spermidine synthase. S-methyl-5'-thioadenosine-binding positions include asparagine 147, glutamate 226, and 251–252 (DG). Aspartate 269 (proton acceptor) is an active-site residue.

It belongs to the spermidine/spermine synthase family. Homodimer or homotetramer.

The protein localises to the cytoplasm. The catalysed reaction is S-adenosyl 3-(methylsulfanyl)propylamine + putrescine = S-methyl-5'-thioadenosine + spermidine + H(+). The protein operates within amine and polyamine biosynthesis; spermidine biosynthesis; spermidine from putrescine: step 1/1. Catalyzes the irreversible transfer of a propylamine group from the amino donor S-adenosylmethioninamine (decarboxy-AdoMet) to putrescine (1,4-diaminobutane) to yield spermidine. The chain is Probable polyamine aminopropyl transferase (speE) from Bifidobacterium longum (strain NCC 2705).